The following is a 196-amino-acid chain: Calcineurin B homologous protein 2 (196 aa).

The N-myristoyl glycine moiety is linked to residue Gly-2. EF-hand domains are found at residues 26 to 61 (ASLL…AVNP), 71 to 106 (FPNG…PKQP), 111 to 146 (SRMN…MVGV), and 152 to 187 (QLES…MNIE). Position 27 is a phosphoserine (Ser-27). Ca(2+)-binding residues include Asp-124, Asp-126, Asp-128, Lys-130, and Glu-135. The Nuclear export signal signature appears at 137–148 (LQVLRLMVGVQV). Asp-165, Asp-167, Asp-169, and Glu-176 together coordinate Ca(2+).

It belongs to the calcineurin regulatory subunit family. CHP subfamily. Interacts with PPP3CA. Interacts with SLC9A1/NHE1; the interaction occurs in a calcium-dependent manner. Interacts with SLC9A1/NHE1.

It localises to the cytoplasm. Its subcellular location is the nucleus. It is found in the cell membrane. In terms of biological role, functions as an integral cofactor in cell pH regulation by controlling plasma membrane-type Na(+)/H(+) exchange activity. Binds to and activates SLC9A1/NHE1 in a serum-independent manner, thus increasing pH and protecting cells from serum deprivation-induced death. Also plays a role in the regulation of cell proliferation and tumor growth by increasing the phosphatase activity of PPP3CA in a calcium-dependent manner. Activator of the calcineurin/NFAT signaling pathway. Involved in the cytoplasmic translocation of the transcription factor NFATC3 to the nucleus. The protein is Calcineurin B homologous protein 2 (Chp2) of Mus musculus (Mouse).